A 278-amino-acid polypeptide reads, in one-letter code: 1-acyl-sn-glycerol-3-phosphate acyltransferase beta (278 aa).

The first 23 residues, 1-23 (MDPWPWLTAALLLLLLLVQLSRT), serve as a signal peptide directing secretion. Residues 24–29 (ARFYAK) are Lumenal-facing. The chain crosses the membrane as a helical span at residues 30–50 (VGLYCVLCLSFSAAASIVCLL). Residues 51–121 (RHGGRTVDNM…PKRCVQIAKR (71 aa)) are Cytoplasmic-facing. The short motif at 98–103 (HQSILD) is the HXXXXD motif element. The chain crosses the membrane as a helical span at residues 122 to 142 (ELMFTGPVGLIMYLGGVYFIN). Residues 143 to 278 (RQQARTAMSV…IKEPGVLPAQ (136 aa)) are Lumenal-facing. Residues 172–175 (EGTR) carry the EGTR motif motif.

It belongs to the 1-acyl-sn-glycerol-3-phosphate acyltransferase family. In terms of tissue distribution, expressed at high levels in the liver, at intermediate levels in the kidney, gut, heart and skeletal muscles. Undetectable in brain and spleen.

The protein resides in the endoplasmic reticulum membrane. It catalyses the reaction a 1-acyl-sn-glycero-3-phosphate + an acyl-CoA = a 1,2-diacyl-sn-glycero-3-phosphate + CoA. It carries out the reaction 1-(9Z-octadecenoyl)-sn-glycero-3-phosphate + (9Z)-octadecenoyl-CoA = 1,2-di-(9Z-octadecenoyl)-sn-glycero-3-phosphate + CoA. The catalysed reaction is 1-(9Z-octadecenoyl)-sn-glycero-3-phosphate + hexadecanoyl-CoA = 1-(9Z)-octadecenoyl-2-hexadecanoyl-sn-glycero-3-phosphate + CoA. The enzyme catalyses heptadecanoyl-CoA + 1-(9Z-octadecenoyl)-sn-glycero-3-phosphate = 1-(9Z)-octadecenoyl-2-heptadecanoyl-sn-glycero-3-phosphate + CoA. It catalyses the reaction 1-(9Z-octadecenoyl)-sn-glycero-3-phosphate + (9Z,12Z)-octadecadienoyl-CoA = 1-(9Z)-octadecenoyl-2-(9Z,12Z)-octadecadienoyl-sn-glycero-3-phosphate + CoA. It carries out the reaction 1-(9Z-octadecenoyl)-sn-glycero-3-phosphate + tetradecanoyl-CoA = 1-(9Z)-octadecenoyl-2-tetradecanoyl-sn-glycero-3-phosphate + CoA. The catalysed reaction is pentadecanoyl-CoA + 1-(9Z-octadecenoyl)-sn-glycero-3-phosphate = 1-(9Z)-octadecenoyl-2-pentadecanoyl-sn-glycero-3-phosphate + CoA. The enzyme catalyses 1-hexadecanoyl-sn-glycero-3-phosphate + (9Z)-octadecenoyl-CoA = 1-hexadecanoyl-2-(9Z-octadecenoyl)-sn-glycero-3-phosphate + CoA. It catalyses the reaction 1-tetradecanoyl-sn-glycerol 3-phosphate + (9Z)-octadecenoyl-CoA = 1-tetradecanoyl-2-(9Z)-octadecenoyl-sn-glycero-3-phosphate + CoA. It carries out the reaction 1-(9Z,12Z,15Z)-octadecatrienoyl-sn-glycero-3-phosphate + (9Z)-octadecenoyl-CoA = 1-(9Z,12Z,15Z)-octadecatrienoyl-2-(9Z)-octadecenoyl-sn-glycero-3-phosphate + CoA. The catalysed reaction is 1-(6Z,9Z,12Z-octadecatrienoyl)-sn-glycero-3-phosphate + (9Z)-octadecenoyl-CoA = (6Z,9Z,12Z)-octadecatrienoyl-2-(9Z)-octadecenoyl-sn-glycero-3-phosphate + CoA. The enzyme catalyses 1-eicosanoyl-sn-glycero-3-phosphate + (9Z)-octadecenoyl-CoA = 1-eicosanoyl-2-(9Z)-octadecenoyl-sn-glycero-3-phosphate + CoA. It catalyses the reaction 1-hexadecanoyl-sn-glycero-3-phosphate + octadecanoyl-CoA = 1-hexadecanoyl-2-octadecanoyl-sn-glycero-3-phosphate + CoA. It carries out the reaction 1-hexadecanoyl-sn-glycero-3-phosphate + (5Z,8Z,11Z,14Z)-eicosatetraenoyl-CoA = 1-hexadecanoyl-2-(5Z,8Z,11Z,14Z-eicosatetraenoyl)-sn-glycero-3-phosphate + CoA. The catalysed reaction is 1-hexadecanoyl-sn-glycero-3-phosphate + hexadecanoyl-CoA = 1,2-dihexadecanoyl-sn-glycero-3-phosphate + CoA. The enzyme catalyses 1-hexadecanoyl-sn-glycero-3-phosphate + tetradecanoyl-CoA = 1-hexadecanoyl-2-tetradecanoyl-sn-glycero-3-phosphate + CoA. It catalyses the reaction (11Z)-octadecenoyl-CoA + 1-(9Z-octadecenoyl)-sn-glycero-3-phosphate = 1-(9Z)-octadecenoyl-2-(11Z)-octadecenoyl-sn-glycero-3-phosphate + CoA. Its pathway is phospholipid metabolism; CDP-diacylglycerol biosynthesis; CDP-diacylglycerol from sn-glycerol 3-phosphate: step 2/3. Functionally, converts 1-acyl-sn-glycerol-3-phosphate (lysophosphatidic acid or LPA) into 1,2-diacyl-sn-glycerol-3-phosphate (phosphatidic acid or PA) by incorporating an acyl moiety at the sn-2 position of the glycerol backbone. The sequence is that of 1-acyl-sn-glycerol-3-phosphate acyltransferase beta (Agpat2) from Mus musculus (Mouse).